An 83-amino-acid chain; its full sequence is MRLFLSLPVLVVVLSMVLEGPAPAQGAPEVSNPFDGLEELGKTLEDNTREFINRITQSELPAKMWDWFSETFRKVKEKLKIDS.

A signal peptide spans 1–26 (MRLFLSLPVLVVVLSMVLEGPAPAQG).

Belongs to the apolipoprotein C1 family.

The protein localises to the secreted. The protein is Apolipoprotein C-I, acidic form (APOC1A) of Pan troglodytes (Chimpanzee).